A 297-amino-acid polypeptide reads, in one-letter code: XIAP-associated factor 1 (297 aa).

A TRAF-type zinc finger spans residues leucine 22 to aspartate 99. The segment at alanine 178 to valine 255 is disordered. The span at glutamine 202–proline 212 shows a compositional bias: basic and acidic residues. The segment covering arginine 229–serine 245 has biased composition (polar residues).

Interacts with BIRC1, BIRC2, BIRC3, BIRC4, BIRC7 and BIRC8. Part of an complex consisting of BIRC4, XAF1 and BIRC5; the complex formation requires IFN-beta stimulation. Interacts with RNF114, the interaction increases XAF1 stability and proapoptotic effects, and may regulate IFN signaling.

It is found in the cytoplasm. The protein localises to the nucleus. Its subcellular location is the mitochondrion. In terms of biological role, seems to function as a negative regulator of members of the IAP (inhibitor of apoptosis protein) family. Inhibits anti-caspase activity of BIRC4. Induces cleavage and inactivation of BIRC4 independent of caspase activation. Mediates TNF-alpha-induced apoptosis and is involved in apoptosis in trophoblast cells. May inhibit BIRC4 indirectly by activating the mitochondrial apoptosis pathway. After translocation to mitochondria, promotes translocation of BAX to mitochondria and cytochrome c release from mitochondria. Seems to promote the redistribution of BIRC4 from the cytoplasm to the nucleus, probably independent of BIRC4 inactivation which seems to occur in the cytoplasm. The BIRC4-XAF1 complex mediates down-regulation of BIRC5/survivin; the process requires the E3 ligase activity of BIRC4. Seems to be involved in cellular sensitivity to the proapoptotic actions of TRAIL. May be a tumor suppressor by mediating apoptosis resistance of cancer cells. The sequence is that of XIAP-associated factor 1 (XAF1) from Bos taurus (Bovine).